We begin with the raw amino-acid sequence, 373 residues long: XK-related protein 9 (373 aa).

8 consecutive transmembrane segments (helical) span residues 8-28, 38-58, 166-186, 203-223, 224-244, 256-276, 295-315, and 318-338; these read FMMS…DIWV, YVFS…AQCF, AAIM…QVAL, ITYL…VVLL, LFLN…LGII, CISM…FTFF, VLGT…IFNP, and FIPI…FLIV.

Belongs to the XK family. Post-translationally, undergoes proteolytic processing by caspase-3 (CASP3), caspase-6 (CASP6) and caspase-7 (CASP7) to generate the XK-related protein 9, processed form, leading to its activation.

Its subcellular location is the cell membrane. The catalysed reaction is a 1,2-diacyl-sn-glycero-3-phospho-L-serine(in) = a 1,2-diacyl-sn-glycero-3-phospho-L-serine(out). With respect to regulation, activated upon caspase cleavage to generate the XK-related protein 9, processed form. Does not act prior the onset of apoptosis. Functionally, phospholipid scramblase that promotes phosphatidylserine exposure on apoptotic cell surface. Phosphatidylserine is a specific marker only present at the surface of apoptotic cells and acts as a specific signal for engulfment. The chain is XK-related protein 9 from Homo sapiens (Human).